The primary structure comprises 443 residues: Nuclear pore complex-interacting protein family member B15 (443 aa).

The first 18 residues, 1–18, serve as a signal peptide directing secretion; that stretch reads MRLRFWLLIWLLLGFISH. N-linked (GlcNAc...) asparagine glycosylation is present at Asn111. 2 disordered regions span residues 242 to 262 and 330 to 413; these read RMGR…NSLS and SPLP…TRHC. Positions 252–262 are enriched in polar residues; that stretch reads QQHSITDNSLS. Over residues 351 to 393 the composition is skewed to basic and acidic residues; it reads EAEKPPKPKRWRVDEVEQSPKPKRRRADEVEQSPKPKRQREAE. The segment covering 399–412 has biased composition (basic residues); sequence KPKRRRLSKLRTRH.

Belongs to the NPIP family.

The protein localises to the secreted. The protein is Nuclear pore complex-interacting protein family member B15 (NPIPB15) of Homo sapiens (Human).